The primary structure comprises 470 residues: 5-hydroxytryptamine receptor 2A (470 aa).

Residues 1-23 (MDVLFEDNAPLSPTTSSLMPSNG) form a disordered region. Residues 1-80 (MDVLFEDNAP…LQEKNWSALL (80 aa)) are Extracellular-facing. Over residues 10–21 (PLSPTTSSLMPS) the composition is skewed to low complexity. N38, N44, N51, and N54 each carry an N-linked (GlcNAc...) asparagine glycan. The helical transmembrane segment at 81 to 97 (TAVVIILTIAGNILVIM) threads the bilayer. The Cytoplasmic portion of the chain corresponds to 98–111 (AVSLEKKLQNATNY). The helical transmembrane segment at 112–137 (FLMSLAIADMLLGFLVMPVSMLTILY) threads the bilayer. At 138–146 (GYRWPLPSK) the chain is on the extracellular side. The helical transmembrane segment at 147 to 171 (LCAVWIYLDVLFSTASIMHLCAISL) threads the bilayer. An intrachain disulfide couples C148 to C227. D155 contributes to the serotonin binding site. Positions 172 to 174 (DRY) match the DRY motif; important for ligand-induced conformation changes motif. Over 172-191 (DRYVAIQNPIHHSRFNSRTK) the chain is Cytoplasmic. A helical membrane pass occupies residues 192–215 (AFLKIIAVWTISVGISMPIPVFGL). Over 216 to 232 (QDDSKVFKEGSCLLADD) the chain is Extracellular. The helical transmembrane segment at 233–258 (NFVLIGSFVSFFIPLTIMVITYFLTI) threads the bilayer. Residues 259–321 (KSLQKEATLC…QSISNEQKAC (63 aa)) are Cytoplasmic-facing. Position 280 is a phosphoserine (S280). A helical transmembrane segment spans residues 322 to 347 (KVLGIVFFLFVVMWCPFFITNIMAVI). N342 serves as a coordination point for serotonin. C348 and C352 are joined by a disulfide. At 348–355 (CKESCNED) the chain is on the extracellular side. A helical membrane pass occupies residues 356-381 (IIGALLNVFVWIGYLSSAVNPLVYTL). An NPxxY motif; important for ligand-induced conformation changes and signaling motif is present at residues 375–379 (NPLVY). Residues 382-470 (FNKTYRSAFS…NTVNEKVSCV (89 aa)) lie on the Cytoplasmic side of the membrane. The PDZ-binding motif lies at 468–470 (SCV).

This sequence belongs to the G-protein coupled receptor 1 family. In terms of assembly, interacts (via C-terminus) with MPDZ and PATJ. May interact (via C-terminus) with MPP3, PRDX6, DLG4, DLG1, CASK, APBA1 and MAGI2. Interacts with GRM2 and DRD2; this may affect signaling. As to expression, ubiquitous.

The protein resides in the cell membrane. It localises to the cell projection. Its subcellular location is the dendrite. The protein localises to the axon. It is found in the cytoplasmic vesicle. The protein resides in the membrane. It localises to the caveola. Its subcellular location is the presynapse. Its activity is regulated as follows. G-protein coupled receptor activity is regulated by lipids: oleamide increases HTR2A-mediated activity. Functionally, G-protein coupled receptor for 5-hydroxytryptamine (serotonin). Also functions as a receptor for various drugs and psychoactive substances, including mescaline, psilocybin, 1-(2,5-dimethoxy-4-iodophenyl)-2-aminopropane (DOI) and lysergic acid diethylamide (LSD). Ligand binding causes a conformation change that triggers signaling via guanine nucleotide-binding proteins (G proteins) and modulates the activity of downstream effectors. HTR2A is coupled to G(q)/G(11) G alpha proteins and activates phospholipase C-beta, releasing diacylglycerol (DAG) and inositol 1,4,5-trisphosphate (IP3) second messengers that modulate the activity of phosphatidylinositol 3-kinase and promote the release of Ca(2+) ions from intracellular stores, respectively. Beta-arrestin family members inhibit signaling via G proteins and mediate activation of alternative signaling pathways. Affects neural activity, perception, cognition and mood. Plays a role in the regulation of behavior, including responses to anxiogenic situations and psychoactive substances. Plays a role in intestinal smooth muscle contraction, and may play a role in arterial vasoconstriction. This Canis lupus familiaris (Dog) protein is 5-hydroxytryptamine receptor 2A (HTR2A).